The primary structure comprises 314 residues: Olfactory receptor 5P6 (314 aa).

The Extracellular segment spans residues 1–28 (MAFQEDGNHTAVTEFVLFGLTDDPVLRV). N8 carries N-linked (GlcNAc...) asparagine glycosylation. A helical transmembrane segment spans residues 29–49 (ILFIIFLCIYLVTVSGNLSTI). At 50–57 (LLIRVSSQ) the chain is on the cytoplasmic side. The chain crosses the membrane as a helical span at residues 58–78 (LHHPMYFFLSHLAFADIGYSS). Over 79–102 (SVTPNMLVNFLVERHTISYIGCAI) the chain is Extracellular. C100 and C192 are oxidised to a cystine. The helical transmembrane segment at 103-123 (QLGSVVFFGSSECFILAAMAY) threads the bilayer. Over 124 to 136 (DRFMAICNPLLYS) the chain is Cytoplasmic. Residues 137–157 (TKMSTQVCVQLLLIAYIGGFL) form a helical membrane-spanning segment. The Extracellular segment spans residues 158–199 (NTWSFTICFYSLVFCGPNGVNHFFCDFAPLIELSCSDVSVPA). The chain crosses the membrane as a helical span at residues 200-220 (TVPSFTAGSIIVVTVIVIAIS). At 221 to 240 (YIYILITILKMHSTEGRQKA) the chain is on the cytoplasmic side. Residues 241-261 (FSTCTSHLTAVTLFYGTITFI) traverse the membrane as a helical segment. Residues 262–274 (YVMPKSSFSTDQN) are Extracellular-facing. Residues 275 to 295 (KVVSVFYMVVIPMLNPLIYSL) traverse the membrane as a helical segment. At 296–314 (RNNEIKGALKRQIGRKIFS) the chain is on the cytoplasmic side.

Belongs to the G-protein coupled receptor 1 family.

The protein resides in the cell membrane. Functionally, potential odorant receptor. The polypeptide is Olfactory receptor 5P6 (Mus musculus (Mouse)).